The sequence spans 257 residues: Acetylglutamate kinase (257 aa).

Residues 43–44 (GG), R65, and N157 contribute to the substrate site. ATP contacts are provided by residues 180–185 (DVSGIL) and 208–210 (IIT).

This sequence belongs to the acetylglutamate kinase family. ArgB subfamily. In terms of assembly, homodimer.

The protein resides in the cytoplasm. It catalyses the reaction N-acetyl-L-glutamate + ATP = N-acetyl-L-glutamyl 5-phosphate + ADP. Its pathway is amino-acid biosynthesis; L-arginine biosynthesis; N(2)-acetyl-L-ornithine from L-glutamate: step 2/4. In terms of biological role, catalyzes the ATP-dependent phosphorylation of N-acetyl-L-glutamate. The sequence is that of Acetylglutamate kinase from Pectobacterium carotovorum subsp. carotovorum (strain PC1).